The following is a 218-amino-acid chain: Esterase FPY3 (218 aa).

Active-site charge relay system residues include Ser-95, Asp-163, and His-190.

This sequence belongs to the LovG family.

The protein operates within secondary metabolite biosynthesis. Its function is as follows. Esterase; part of the gene cluster that mediates the biosynthesis of the gamma-pyrones fusapyrone (FPY) and deoxyfusapyrone (dFPY). FPY is an undecaketide and thus likely synthesized by the polyketide synthase FPY1 from acetyl-CoA functioning as starter unit and the addition of 10 malonyl-CoA extender units by successive Claisen-condensations. Next to this, FPY shares some rare features: C-glycosylated 4-deoxyglucose at C-3, a gem-dimethyl group at C-13, and an alpha-beta to beta-gamma double bond shift at C-20. During FPY biosynthesis mono-C-methyl groups are transferred to the tetra-, penta-, hexa- and heptaketide, while two C-methyl groups are transferred to the nonaketide, suggesting that the CMet domain is programmed to selectively catalyze two successive C-alpha-methylation reactions of the nonaketide, while other alpha-carbons are non- or mono-methylated only. While the origin of the 4'-deoxyglucose moiety remains opaque, its transfer to C-3 is most likely mediated by the C-glycosyltransferase FPY2. Next to this, the hydroxyl group present at C-33 and discriminating between FPY and dFPY, is likely to be installed by the cytochrome P450 monooxygenase FPY7. No putative function can be predicted for the remaining genes FPY3-FPY6. The sequence is that of Esterase FPY3 from Fusarium mangiferae (Mango malformation disease fungus).